We begin with the raw amino-acid sequence, 231 residues long: 7-cyano-7-deazaguanine synthase (231 aa).

8–18 (FSGGQDSTTCL) is a binding site for ATP. Positions 188, 197, 200, and 203 each coordinate Zn(2+).

It belongs to the QueC family. The cofactor is Zn(2+).

It carries out the reaction 7-carboxy-7-deazaguanine + NH4(+) + ATP = 7-cyano-7-deazaguanine + ADP + phosphate + H2O + H(+). The protein operates within purine metabolism; 7-cyano-7-deazaguanine biosynthesis. In terms of biological role, catalyzes the ATP-dependent conversion of 7-carboxy-7-deazaguanine (CDG) to 7-cyano-7-deazaguanine (preQ(0)). This chain is 7-cyano-7-deazaguanine synthase, found in Shigella dysenteriae serotype 1 (strain Sd197).